The following is a 282-amino-acid chain: Large ribosomal subunit protein uL2c (282 aa).

Positions 230 to 261 (SAQNAVDHPHGGGEGKAPIGRIPSTPWGKPAL) are disordered.

Belongs to the universal ribosomal protein uL2 family. In terms of assembly, part of the 50S ribosomal subunit.

The protein resides in the plastid. The polypeptide is Large ribosomal subunit protein uL2c (rpl2) (Helicosporidium sp. subsp. Simulium jonesii (Green alga)).